The primary structure comprises 227 residues: 2-C-methyl-D-erythritol 4-phosphate cytidylyltransferase (227 aa).

It belongs to the IspD/TarI cytidylyltransferase family. IspD subfamily.

It carries out the reaction 2-C-methyl-D-erythritol 4-phosphate + CTP + H(+) = 4-CDP-2-C-methyl-D-erythritol + diphosphate. It participates in isoprenoid biosynthesis; isopentenyl diphosphate biosynthesis via DXP pathway; isopentenyl diphosphate from 1-deoxy-D-xylulose 5-phosphate: step 2/6. Catalyzes the formation of 4-diphosphocytidyl-2-C-methyl-D-erythritol from CTP and 2-C-methyl-D-erythritol 4-phosphate (MEP). The sequence is that of 2-C-methyl-D-erythritol 4-phosphate cytidylyltransferase from Petrotoga mobilis (strain DSM 10674 / SJ95).